The sequence spans 876 residues: Alanine--tRNA ligase (876 aa).

The Zn(2+) site is built by His-564, His-568, Cys-666, and His-670.

This sequence belongs to the class-II aminoacyl-tRNA synthetase family. Zn(2+) serves as cofactor.

The protein localises to the cytoplasm. It catalyses the reaction tRNA(Ala) + L-alanine + ATP = L-alanyl-tRNA(Ala) + AMP + diphosphate. In terms of biological role, catalyzes the attachment of alanine to tRNA(Ala) in a two-step reaction: alanine is first activated by ATP to form Ala-AMP and then transferred to the acceptor end of tRNA(Ala). Also edits incorrectly charged Ser-tRNA(Ala) and Gly-tRNA(Ala) via its editing domain. In Porphyromonas gingivalis (strain ATCC BAA-308 / W83), this protein is Alanine--tRNA ligase.